The primary structure comprises 420 residues: Probable protein phosphatase 2C 76 (420 aa).

The PPM-type phosphatase domain maps to 101 to 347 (SCGYCSFRGK…DNITCIVVKF (247 aa)). Mn(2+) is bound by residues Asp-137, Gly-138, Asp-299, and Asp-338. The interval 353-420 (ESPKIETNAM…PETKGEKAGE (68 aa)) is disordered. Basic and acidic residues predominate over residues 403–420 (PDPKPETEPETKGEKAGE).

It belongs to the PP2C family. Requires Mg(2+) as cofactor. It depends on Mn(2+) as a cofactor.

The enzyme catalyses O-phospho-L-seryl-[protein] + H2O = L-seryl-[protein] + phosphate. It catalyses the reaction O-phospho-L-threonyl-[protein] + H2O = L-threonyl-[protein] + phosphate. The polypeptide is Probable protein phosphatase 2C 76 (Arabidopsis thaliana (Mouse-ear cress)).